The following is a 180-amino-acid chain: Vacuolar transporter chaperone complex subunit 1 (180 aa).

Residues 1–70 (MASVIEKGLA…PKTFFANERT (70 aa)) are Cytoplasmic-facing. The chain crosses the membrane as a helical span at residues 71-91 (FLKWMSISVMIGMMSLTLLNF). The Vacuolar portion of the chain corresponds to 92–100 (GDTSSNASE). The chain crosses the membrane as a helical span at residues 101 to 121 (LAGLVLLPVSILFMIHSLFVF). Over 122-140 (KDRANKIYMREPMRYDDTK) the chain is Cytoplasmic. The helical transmembrane segment at 141–161 (GPTILVLVLGVSLGIAAIFSV) threads the bilayer. The Vacuolar portion of the chain corresponds to 162-180 (QKQYYRTASSSFNDGPRFS).

The protein belongs to the VTC1 family. The VTC core complex is an integral membrane heterooligomer composed of at least the catalytic subunit vtc4 and the accessory subunits vtc1 and vtc2. vtc1 is a small membrane protein without hydrophilic domain. Vtc2 and vtc4 are related and have 2 hydrophilic domains that face the cytosol, an N-terminal SPX domain and the central core domain. The central core in vtc4 is the catalytic domain.

It is found in the acidocalcisome membrane. Functionally, accessory subunit of the vacuolar transporter chaperone (VTC) complex. The VTC complex acts as a vacuolar polyphosphate polymerase that catalyzes the synthesis of inorganic polyphosphate (polyP) via transfer of phosphate from ATP to a growing polyP chain, releasing ADP. VTC exposes its catalytic domain vtc4 to the cytosol, where the growing polyP chain winds through a tunnel-shaped pocket, integrating cytoplasmic polymer synthesis with polyP membrane translocation. The VTC complex carries 9 vacuolar transmembrane domains, which are likely to constitute the translocation channel into the organelle lumen. PolyP synthesis is tightly coupled to its transport into the vacuole lumen, in order to avoid otherwise toxic intermediates in the cytosol, and it depends on the proton gradient across the membrane, formed by V-ATPase. VTC1 contributes only 3 transmembrane domains to the complex. The VTC complex also plays a role in vacuolar membrane fusion. In Trypanosoma brucei brucei (strain 927/4 GUTat10.1), this protein is Vacuolar transporter chaperone complex subunit 1 (VTC1).